A 219-amino-acid chain; its full sequence is 2-hydroxy-3-keto-5-methylthiopentenyl-1-phosphate phosphatase (219 aa).

Belongs to the HAD-like hydrolase superfamily. MtnX family.

It catalyses the reaction 2-hydroxy-5-methylsulfanyl-3-oxopent-1-enyl phosphate + H2O = 1,2-dihydroxy-5-(methylsulfanyl)pent-1-en-3-one + phosphate. The protein operates within amino-acid biosynthesis; L-methionine biosynthesis via salvage pathway; L-methionine from S-methyl-5-thio-alpha-D-ribose 1-phosphate: step 4/6. In terms of biological role, dephosphorylates 2-hydroxy-3-keto-5-methylthiopentenyl-1-phosphate (HK-MTPenyl-1-P) yielding 1,2-dihydroxy-3-keto-5-methylthiopentene (DHK-MTPene). The chain is 2-hydroxy-3-keto-5-methylthiopentenyl-1-phosphate phosphatase from Bacillus cereus (strain B4264).